The primary structure comprises 365 residues: MINTTSRRKIEHLKLCAESPVEARGVSAGFEDVTLIHRALPELNMDELDLTVDFLGKRMQAPFLIASITGGHPDTLPVNAALAAAAEELGVGIGVGSQRAAIDDPAQEDSFRVVRDKAPNAFVYGNVGAAQIRQYGVEGVEKLIEMIDADALAIHLNFLQEAIQPEGDRDATGCLDMIAEICSMVRIPVIAKETGAGISREDALLLHKAGVSAIDVGGVGGTSWAGVEVYRAKESKDPVSERLGELFWDFGIPTVASLIESRVSLPLIATGGVRTGLDIAKSIALGASAASAALPFVGPSLEGKESVVKVLSCMLDEFRAAMFLCGCANIQALHNSPVVVTGWTLKYLEQRGFNVKDYSLPKNAL.

Residue 8 to 9 (RK) coordinates substrate. FMN-binding positions include 67–69 (SIT), S97, and N126. Residue 97–99 (SQR) coordinates substrate. Residue Q160 participates in substrate binding. A Mg(2+)-binding site is contributed by E161. Residues K192, T222, 272-274 (GVR), and 293-294 (AL) contribute to the FMN site.

It belongs to the IPP isomerase type 2 family. Homooctamer. Dimer of tetramers. FMN is required as a cofactor. The cofactor is NADPH. It depends on Mg(2+) as a cofactor.

The protein localises to the cytoplasm. The catalysed reaction is isopentenyl diphosphate = dimethylallyl diphosphate. Its function is as follows. Involved in the biosynthesis of isoprenoids. Catalyzes the 1,3-allylic rearrangement of the homoallylic substrate isopentenyl (IPP) to its allylic isomer, dimethylallyl diphosphate (DMAPP). In Methanosarcina acetivorans (strain ATCC 35395 / DSM 2834 / JCM 12185 / C2A), this protein is Isopentenyl-diphosphate delta-isomerase.